The chain runs to 891 residues: Alanine--tRNA ligase (891 aa).

4 residues coordinate Zn(2+): His-576, His-580, Cys-684, and His-688.

This sequence belongs to the class-II aminoacyl-tRNA synthetase family. Zn(2+) is required as a cofactor.

Its subcellular location is the cytoplasm. The catalysed reaction is tRNA(Ala) + L-alanine + ATP = L-alanyl-tRNA(Ala) + AMP + diphosphate. Functionally, catalyzes the attachment of alanine to tRNA(Ala) in a two-step reaction: alanine is first activated by ATP to form Ala-AMP and then transferred to the acceptor end of tRNA(Ala). Also edits incorrectly charged Ser-tRNA(Ala) and Gly-tRNA(Ala) via its editing domain. The polypeptide is Alanine--tRNA ligase (Orientia tsutsugamushi (strain Boryong) (Rickettsia tsutsugamushi)).